The primary structure comprises 371 residues: Palmitoyltransferase ERF2 (371 aa).

Topologically, residues 1-79 are cytoplasmic; sequence MSRRERYSVE…GRLRSVKQKP (79 aa). Residues 80–100 traverse the membrane as a helical segment; sequence INVVTGISILIPGILFWIFEA. Over 101-106 the chain is Lumenal; that stretch reads KWIWFH. A helical transmembrane segment spans residues 107-127; that stretch reads VNPSIVILFSYFWLITVSFFI. At 128 to 225 the chain is on the cytoplasmic side; it reads KASMSDPGML…NCIGYRNYKY (98 aa). The DHHC domain occupies 181-231; it reads KYCATCHIWRSPRASHCSVCNSCIISHDHHCVFLNNCIGYRNYKYFLWFLL. The active-site S-palmitoyl cysteine intermediate is the C211. A helical membrane pass occupies residues 226–246; sequence FLWFLLFAVLGCILMSVISFI. Residues 247–274 lie on the Lumenal side of the membrane; that stretch reads HVFYYRLGMETSVSTFRSSISKYPVSFL. The chain crosses the membrane as a helical span at residues 275–295; sequence LCIYSLLALVYPFPLLIFHIF. Residues 296-371 lie on the Cytoplasmic side of the membrane; sequence LTSYNLTTRE…KLDPLQSFSS (76 aa).

It belongs to the DHHC palmitoyltransferase family. ERF2/ZDHHC9 subfamily. Interacts with ERF4. In terms of processing, autopalmitoylated.

Its subcellular location is the endoplasmic reticulum membrane. It carries out the reaction L-cysteinyl-[protein] + hexadecanoyl-CoA = S-hexadecanoyl-L-cysteinyl-[protein] + CoA. In terms of biological role, the ERF2-ERF4 complex is a palmitoyltransferase specific for Ras proteins. This Debaryomyces hansenii (strain ATCC 36239 / CBS 767 / BCRC 21394 / JCM 1990 / NBRC 0083 / IGC 2968) (Yeast) protein is Palmitoyltransferase ERF2 (ERF2).